A 154-amino-acid chain; its full sequence is Myoglobin (154 aa).

In terms of domain architecture, Globin spans 2 to 148 (GLSEGEWQLV…FRKDIATKYK (147 aa)). Serine 4 carries the phosphoserine modification. Histidine 65 contributes to the nitrite binding site. Histidine 65 contacts O2. Threonine 68 is modified (phosphothreonine). A heme b-binding site is contributed by histidine 94.

Belongs to the globin family. As to quaternary structure, monomeric.

The protein localises to the cytoplasm. It is found in the sarcoplasm. The catalysed reaction is Fe(III)-heme b-[protein] + nitric oxide + H2O = Fe(II)-heme b-[protein] + nitrite + 2 H(+). It catalyses the reaction H2O2 + AH2 = A + 2 H2O. Its function is as follows. Monomeric heme protein which primary function is to store oxygen and facilitate its diffusion within muscle tissues. Reversibly binds oxygen through a pentacoordinated heme iron and enables its timely and efficient release as needed during periods of heightened demand. Depending on the oxidative conditions of tissues and cells, and in addition to its ability to bind oxygen, it also has a nitrite reductase activity whereby it regulates the production of bioactive nitric oxide. Under stress conditions, like hypoxia and anoxia, it also protects cells against reactive oxygen species thanks to its pseudoperoxidase activity. This chain is Myoglobin (MB), found in Phocoenoides dalli dalli (Dall's porpoise).